The primary structure comprises 295 residues: Probable deoxyhypusine synthase (295 aa).

Lys267 functions as the Nucleophile in the catalytic mechanism.

Belongs to the deoxyhypusine synthase family. NAD(+) serves as cofactor.

It carries out the reaction [eIF5A protein]-L-lysine + spermidine = [eIF5A protein]-deoxyhypusine + propane-1,3-diamine. Its pathway is protein modification; eIF5A hypusination. Its function is as follows. Catalyzes the NAD-dependent oxidative cleavage of spermidine and the subsequent transfer of the butylamine moiety of spermidine to the epsilon-amino group of a specific lysine residue of the eIF-5A precursor protein to form the intermediate deoxyhypusine residue. The sequence is that of Probable deoxyhypusine synthase from Pyrobaculum calidifontis (strain DSM 21063 / JCM 11548 / VA1).